Reading from the N-terminus, the 28-residue chain is Endoglucanase (28 aa).

The active-site Nucleophile is Glu-20.

Belongs to the glycosyl hydrolase 5 (cellulase A) family.

It is found in the cell membrane. It carries out the reaction Endohydrolysis of (1-&gt;4)-beta-D-glucosidic linkages in cellulose, lichenin and cereal beta-D-glucans.. The chain is Endoglucanase from Schizophyllum commune (Split gill fungus).